The chain runs to 85 residues: Cell division topological specificity factor (85 aa).

The protein belongs to the MinE family.

Its function is as follows. Prevents the cell division inhibition by proteins MinC and MinD at internal division sites while permitting inhibition at polar sites. This ensures cell division at the proper site by restricting the formation of a division septum at the midpoint of the long axis of the cell. This is Cell division topological specificity factor from Dechloromonas aromatica (strain RCB).